The following is a 379-amino-acid chain: uncharacterized protein (379 aa).

A helical membrane pass occupies residues 7–27 (VYIFAGIFLFIALIILIKIFF).

Its subcellular location is the membrane. This is an uncharacterized protein from Caenorhabditis elegans.